Here is a 2161-residue protein sequence, read N- to C-terminus: Voltage-dependent L-type calcium channel subunit alpha-1D (2161 aa).

Disordered stretches follow at residues 1-21 (MMMMMMMKKMQHQRQQQADHA), 30-49 (TRLPLSGEGPTSQPNSSKQT), and 64-100 (KAAQTMSTSAPPPVGSLSQRKRQQYAKSKKQGNSSNS). Residues 1 to 126 (MMMMMMMKKM…RACISIVEWK (126 aa)) are Cytoplasmic-facing. The segment covering 38-49 (GPTSQPNSSKQT) has biased composition (polar residues). A compositionally biased stretch (basic residues) spans 82–93 (QRKRQQYAKSKK). Residues 113–409 (NPIRRACISI…LVLGVLSGEF (297 aa)) form an I repeat. Residues 127-145 (PFDIFILLAIFANCVALAI) traverse the membrane as a helical segment. Residues 146–163 (YIPFPEDDSNSTNHNLEK) lie on the Extracellular side of the membrane. N-linked (GlcNAc...) asparagine glycosylation is present at Asn-155. Residues 164–183 (VEYAFLIIFTVETFLKIIAY) traverse the membrane as a helical segment. Residues 184-195 (GLLLHPNAYVRN) are Cytoplasmic-facing. Residues 196–214 (GWNLLDFVIVIVGLFSVIL) traverse the membrane as a helical segment. Over 215–235 (EQLTKETEGGNHSSGKSGGFD) the chain is Extracellular. N-linked (GlcNAc...) asparagine glycosylation occurs at Asn-225. Residues 236–254 (VKALRAFRVLRPLRLVSGV) form a helical membrane-spanning segment. At 255-273 (PSLQVVLNSIIKAMVPLLH) the chain is on the cytoplasmic side. Residues 274-293 (IALLVLFVIIIYAIIGLELF) form a helical membrane-spanning segment. Topologically, residues 294-381 (IGKMHKTCFF…WMNDAMGFEL (88 aa)) are extracellular. N-linked (GlcNAc...) asparagine glycosylation is present at Asn-329. Glu-364 contributes to the Ca(2+) binding site. Residues 382-406 (PWVYFVSLVIFGSFFVLNLVLGVLS) form a helical membrane-spanning segment. Residues 407 to 523 (GEFSKEREKA…RRCRAAVKSV (117 aa)) lie on the Cytoplasmic side of the membrane. Residues 429–446 (QQLEEDLKGYLDWITQAE) form a binding to the beta subunit region. Residues 449 to 482 (DPENEEEGGEEGKRNTSMPTSETESVNTENVSGE) are disordered. Residues 463-479 (NTSMPTSETESVNTENV) are compositionally biased toward polar residues. The stretch at 509–755 (NRFNRRRCRA…VFLAIAVDNL (247 aa)) is one II repeat. A helical membrane pass occupies residues 524–543 (TFYWLVIVLVFLNTLTISSE). The Extracellular segment spans residues 544-558 (HYNQPDWLTQIQDIA). The chain crosses the membrane as a helical span at residues 559 to 577 (NKVLLALFTCEMLVKMYSL). Residues 578–585 (GLQAYFVS) are Cytoplasmic-facing. A helical membrane pass occupies residues 586–604 (LFNRFDCFVVCGGITETIL). Residues 605 to 614 (VELEIMSPLG) lie on the Extracellular side of the membrane. A helical membrane pass occupies residues 615–633 (ISVFRCVRLLRIFKVTRHW). The Cytoplasmic segment spans residues 634 to 652 (TSLSNLVASLLNSMKSIAS). The chain crosses the membrane as a helical span at residues 653-673 (LLLLLFLFIIIFSLLGMQLFG). Residues 674 to 727 (GKFNFDETQTKRSTFDNFPQALLTVFQILTGEDWNAVMYDGIMAYGGPSSSGMI) are Extracellular-facing. Glu-705 lines the Ca(2+) pocket. A helical membrane pass occupies residues 728-752 (VCIYFIILFICGNYILLNVFLAIAV). The Cytoplasmic portion of the chain corresponds to 753–886 (DNLADAESLN…VGCHKLINHH (134 aa)). Basic and acidic residues predominate over residues 766–790 (KEEAEEKERKKIARKESLENKKNNK). The segment at 766-850 (KEEAEEKERK…AGPRPRRISE (85 aa)) is disordered. The span at 791–802 (PEVNQIANSDNK) shows a compositional bias: polar residues. The span at 825–838 (VGEEEEEEEEDEPE) shows a compositional bias: acidic residues. The stretch at 873-1155 (NPIRVGCHKL…IFVGFVIVTF (283 aa)) is one III repeat. A helical membrane pass occupies residues 887–905 (IFTNLILVFIMLSSAALAA). Over 906–921 (EDPIRSHSFRNTILGY) the chain is Extracellular. Residues 922–941 (FDYAFTAIFTVEILLKMTTF) form a helical membrane-spanning segment. The Cytoplasmic segment spans residues 942–953 (GAFLHKGAFCRN). The chain crosses the membrane as a helical span at residues 954-972 (YFNLLDMLVVGVSLVSFGI). Residues 973–978 (QSSAIS) lie on the Extracellular side of the membrane. A helical membrane pass occupies residues 979 to 998 (VVKILRVLRVLRPLRAINRA). Over 999 to 1017 (KGLKHVVQCVFVAIRTIGN) the chain is Cytoplasmic. The helical transmembrane segment at 1018–1037 (IMIVTTLLQFMFACIGVQLF) threads the bilayer. Residues 1038 to 1127 (KGKFYRCTDE…IGPIYNHRVE (90 aa)) lie on the Extracellular side of the membrane. The tract at residues 1075–1165 (RIWQNSDFNF…QEQGEKEYKN (91 aa)) is dihydropyridine binding. Position 1101 (Glu-1101) interacts with Ca(2+). The chain crosses the membrane as a helical span at residues 1128–1148 (ISIFFIIYIIIVAFFMMNIFV). At 1149-1205 (GFVIVTFQEQGEKEYKNCELDKNQRQCVEYALKARPLRRYIPKNPYQYKFWYVVNSS) the chain is on the cytoplasmic side. An IV repeat occupies 1192–1467 (NPYQYKFWYV…LFVAVIMDNF (276 aa)). Residues 1206-1224 (PFEYMMFVLIMLNTLCLAM) form a helical membrane-spanning segment. Over 1225 to 1239 (QHYEQSKMFNDAMDI) the chain is Extracellular. A helical membrane pass occupies residues 1240 to 1259 (LNMVFTGVFTVEMVLKVIAF). The Cytoplasmic portion of the chain corresponds to 1260–1266 (KPKGYFS). A helical membrane pass occupies residues 1267–1288 (DAWNTFDSLIVIGSIIDVALSE). Residues 1289-1313 (ADPTESENVPVPTATPGNSEESNRI) are Extracellular-facing. Residues 1314–1333 (SITFFRLFRVMRLVKLLSRG) traverse the membrane as a helical segment. Over 1334-1352 (EGIRTLLWTFIKSFQALPY) the chain is Cytoplasmic. A helical membrane pass occupies residues 1353–1372 (VALLIAMLFFIYAVIGMQMF). Residues 1373 to 1439 (GKVAMRDNNQ…GEEYTCGSNF (67 aa)) are Extracellular-facing. The tract at residues 1420 to 1486 (LCDPESDYNP…LGPHHLDEFK (67 aa)) is dihydropyridine binding. The interval 1432–1475 (EYTCGSNFAIVYFISFYMLCAFLIINLFVAVIMDNFDYLTRDWS) is phenylalkylamine binding. Residues 1440–1464 (AIVYFISFYMLCAFLIINLFVAVIM) form a helical membrane-spanning segment. Residues 1465 to 2161 (DNFDYLTRDW…ADEMICITTL (697 aa)) are Cytoplasmic-facing. Disordered stretches follow at residues 1659–1678 (SCDLQDDEPEETKREEEDDV), 1684–1804 (ALLG…VKRT), 1872–1919 (PGRN…ASHR), and 2108–2152 (NGNV…EDLA). Residues 1745–1763 (SIGKQVPTSTNANLNNANM) show a composition bias toward polar residues. Over residues 1779-1797 (HVSENGHHSSHKHDREPQR) the composition is skewed to basic and acidic residues. Over residues 2138-2152 (SDEEPDPGRDEEDLA) the composition is skewed to acidic residues.

This sequence belongs to the calcium channel alpha-1 subunit (TC 1.A.1.11) family. CACNA1D subfamily. As to quaternary structure, voltage-dependent calcium channels are multisubunit complexes, consisting of alpha-1, alpha-2, beta and delta subunits in a 1:1:1:1 ratio. The channel activity is directed by the pore-forming and voltage-sensitive alpha-1 subunit. In many cases, this subunit is sufficient to generate voltage-sensitive calcium channel activity. The auxiliary subunits beta and alpha-2/delta linked by a disulfide bridge regulate the channel activity. Channel activity is further modulated, depending on the presence of specific delta subunit isoforms. Interacts (via IQ domain) with CABP1 and CABP4 in a calcium independent manner. Interacts with RIMBP2. In terms of tissue distribution, expressed in pancreatic islets and in brain, where it has been seen in cerebral cortex, hippocampus, basal ganglia, habenula and thalamus. Expressed in the small cell lung carcinoma cell line SCC-9. No expression in skeletal muscle.

It localises to the membrane. It catalyses the reaction Ca(2+)(in) = Ca(2+)(out). Its function is as follows. Voltage-sensitive calcium channels (VSCC) mediate the entry of calcium ions into excitable cells and are also involved in a variety of calcium-dependent processes, including muscle contraction, hormone or neurotransmitter release, gene expression, cell motility, cell division and cell death. The isoform alpha-1D gives rise to L-type calcium currents. Long-lasting (L-type) calcium channels belong to the 'high-voltage activated' (HVA) group. They are blocked by dihydropyridines (DHP), phenylalkylamines, and by benzothiazepines. In terms of biological role, voltage-sensitive calcium channels (VSCC) mediate the entry of calcium ions into excitable cells and are also involved in a variety of calcium-dependent processes, including muscle contraction, hormone or neurotransmitter release, gene expression, cell motility, cell division and cell death. The isoform alpha-1D gives rise to L-type calcium currents. The protein is Voltage-dependent L-type calcium channel subunit alpha-1D (CACNA1D) of Homo sapiens (Human).